Reading from the N-terminus, the 1408-residue chain is DNA-directed RNA polymerase subunit beta' (1408 aa).

Residues C70, C72, C85, and C88 each coordinate Zn(2+). Residues D460, D462, and D464 each coordinate Mg(2+). Positions 814, 888, 895, and 898 each coordinate Zn(2+).

The protein belongs to the RNA polymerase beta' chain family. As to quaternary structure, the RNAP catalytic core consists of 2 alpha, 1 beta, 1 beta' and 1 omega subunit. When a sigma factor is associated with the core the holoenzyme is formed, which can initiate transcription. Mg(2+) serves as cofactor. The cofactor is Zn(2+).

The catalysed reaction is RNA(n) + a ribonucleoside 5'-triphosphate = RNA(n+1) + diphosphate. Its function is as follows. DNA-dependent RNA polymerase catalyzes the transcription of DNA into RNA using the four ribonucleoside triphosphates as substrates. This Shewanella frigidimarina (strain NCIMB 400) protein is DNA-directed RNA polymerase subunit beta'.